The following is a 415-amino-acid chain: MSFYEELKWRNLIKDSSDEKELKNLLDCKKIKFYCGFDPTSDSLTVGHLVQLTMMSLLEKQGHSPFILVGGATGLIGDPKETEERKLLSLETSLQNAKSLETQLKKILFQKKITFLNNYEWFSQLDIITFLRKYGKLFNINYMLNKQTVAKRLSSGISFTEFTYMILQSLDFHHLYKNYGVQLQLGGSDQWGNITSGLELIRKLETTSHAFGLSTPLLLNANGTKFGKSEQDVLWLDPQKTSPYKIYQYFLNLADEEVVNCLKQLTLIPKEEILELEKATLQTPQKRLAQKALANNIVNLIYSQKVLQECHKTNEVLFLNKKKESFQEADFTLLNKTLFSYETSLVSIPLSEALVKTQLTTSKREAREFIQRGSIQIFNEKIKNPDYLIDKKNTLFNKYVLLKKGKKNNSLIILN.

L-tyrosine is bound at residue Tyr-34. The 'HIGH' region signature appears at 39-48 (PTSDSLTVGH). Tyr-164 and Gln-168 together coordinate L-tyrosine. A 'KMSKS' region motif is present at residues 225 to 229 (KFGKS). Residue Lys-228 coordinates ATP. The 67-residue stretch at 348 to 414 (IPLSEALVKT…GKKNNSLIIL (67 aa)) folds into the S4 RNA-binding domain.

It belongs to the class-I aminoacyl-tRNA synthetase family. TyrS type 1 subfamily. As to quaternary structure, homodimer.

It localises to the cytoplasm. The catalysed reaction is tRNA(Tyr) + L-tyrosine + ATP = L-tyrosyl-tRNA(Tyr) + AMP + diphosphate + H(+). Its function is as follows. Catalyzes the attachment of tyrosine to tRNA(Tyr) in a two-step reaction: tyrosine is first activated by ATP to form Tyr-AMP and then transferred to the acceptor end of tRNA(Tyr). This chain is Tyrosine--tRNA ligase, found in Phytoplasma australiense.